A 454-amino-acid chain; its full sequence is Protein phosphatase methylesterase 1 (454 aa).

Disordered regions lie at residues 1 to 69 (MSEL…TGTV) and 181 to 203 (TTVTAASSVPGEGDETTGQAPPP). Low complexity predominate over residues 44-69 (AGPSPGGFPFDDDSSSASSVSSTGTV). Residues serine 240, aspartate 266, and histidine 412 contribute to the active site.

The protein belongs to the AB hydrolase superfamily.

It catalyses the reaction [phosphatase 2A protein]-C-terminal L-leucine methyl ester + H2O = [phosphatase 2A protein]-C-terminal L-leucine + methanol + H(+). Demethylates proteins that have been reversibly carboxymethylated. Demethylates the phosphatase PP2A catalytic subunit. This chain is Protein phosphatase methylesterase 1 (pme-1), found in Neurospora crassa (strain ATCC 24698 / 74-OR23-1A / CBS 708.71 / DSM 1257 / FGSC 987).